The sequence spans 321 residues: Degreening-related gene dee76 protein (321 aa).

It belongs to the Mo25 family.

The protein is Degreening-related gene dee76 protein (DEE76) of Auxenochlorella protothecoides (Green microalga).